Reading from the N-terminus, the 362-residue chain is Class I histocompatibility antigen, Gogo-OKO alpha chain (362 aa).

The first 24 residues, Met1–Ala24, serve as a signal peptide directing secretion. An alpha-1 region spans residues Gly25 to Gly114. Residues Gly25–Ile308 are Extracellular-facing. Asn110 carries an N-linked (GlcNAc...) asparagine glycan. Positions Gly115–Thr206 are alpha-2. 2 cysteine pairs are disulfide-bonded: Cys125-Cys188 and Cys227-Cys283. Residues Asp207–Trp298 are alpha-3. An Ig-like C1-type domain is found at Pro209–Thr295. Residues Glu299 to Ile308 form a connecting peptide region. The helical transmembrane segment at Val309–Trp332 threads the bilayer. The Cytoplasmic portion of the chain corresponds to Arg333–Ala362. The disordered stretch occupies residues Ser337 to Ala362. The segment covering Gly342–Ala362 has biased composition (low complexity).

The protein belongs to the MHC class I family. In terms of assembly, heterodimer of an alpha chain and a beta chain (beta-2-microglobulin).

The protein localises to the membrane. Functionally, involved in the presentation of foreign antigens to the immune system. This Gorilla gorilla gorilla (Western lowland gorilla) protein is Class I histocompatibility antigen, Gogo-OKO alpha chain.